We begin with the raw amino-acid sequence, 185 residues long: uncharacterized protein (185 aa).

This is an uncharacterized protein from Methanocaldococcus jannaschii (strain ATCC 43067 / DSM 2661 / JAL-1 / JCM 10045 / NBRC 100440) (Methanococcus jannaschii).